A 537-amino-acid polypeptide reads, in one-letter code: Lysine--tRNA ligase (537 aa).

The short motif at 30-38 (PSGNIHIGN) is the 'HIGH' region element. Positions 276–280 (AMSSS) match the 'KMSKS' region motif.

It belongs to the class-I aminoacyl-tRNA synthetase family.

Its subcellular location is the cytoplasm. It catalyses the reaction tRNA(Lys) + L-lysine + ATP = L-lysyl-tRNA(Lys) + AMP + diphosphate. The protein is Lysine--tRNA ligase of Methanosarcina barkeri (strain Fusaro / DSM 804).